The primary structure comprises 103 residues: Methane monooxygenase component D (103 aa).

In terms of assembly, the soluble methane monooxygenase (sMMO) consists of four components A/MMOH (composed of alpha/MmoX, beta/MmoY and gamma/MmoZ), B/MMOB (MmoB), C/MMOR (MmoC) and D/MMOD (MmoD).

In Methylococcus capsulatus (strain ATCC 33009 / NCIMB 11132 / Bath), this protein is Methane monooxygenase component D (mmoD).